A 131-amino-acid chain; its full sequence is Small ribosomal subunit protein uS8 (131 aa).

Belongs to the universal ribosomal protein uS8 family. In terms of assembly, part of the 30S ribosomal subunit. Contacts proteins S5 and S12.

In terms of biological role, one of the primary rRNA binding proteins, it binds directly to 16S rRNA central domain where it helps coordinate assembly of the platform of the 30S subunit. This chain is Small ribosomal subunit protein uS8, found in Dehalococcoides mccartyi (strain CBDB1).